The sequence spans 503 residues: Trehalose-6-phosphate synthase (503 aa).

Residue R22 participates in D-glucose 6-phosphate binding. 42–43 (GG) is a binding site for UDP-alpha-D-glucose. D-glucose 6-phosphate contacts are provided by Y94 and D148. Residues R290 and K295 each coordinate UDP-alpha-D-glucose. R328 lines the D-glucose 6-phosphate pocket. Residue 393 to 397 (LVAKE) participates in UDP-alpha-D-glucose binding. The interval 481–503 (GETGDSGVTGESTPAPESDSGSF) is disordered.

This sequence belongs to the glycosyltransferase 20 family. Homotetramer.

It catalyses the reaction ADP-alpha-D-glucose + D-glucose 6-phosphate = alpha,alpha-trehalose 6-phosphate + ADP + H(+). The enzyme catalyses CDP-alpha-D-glucose + D-glucose 6-phosphate = alpha,alpha-trehalose 6-phosphate + CDP + H(+). The catalysed reaction is GDP-alpha-D-glucose + D-glucose 6-phosphate = alpha,alpha-trehalose 6-phosphate + GDP + H(+). It carries out the reaction TDP-alpha-D-glucose + D-glucose 6-phosphate = 5-methyl-UDP + alpha,alpha-trehalose 6-phosphate + H(+). It catalyses the reaction D-glucose 6-phosphate + UDP-alpha-D-glucose = alpha,alpha-trehalose 6-phosphate + UDP + H(+). Its pathway is glycan biosynthesis; trehalose biosynthesis. Stimulated by the polynucleotide FII (physiological activator), and by chondroitin sulfate (CS) and heparin. Activation by the polyanion is inhibited by high salt concentration as well as by high concentrations of mononucleoside phosphates. Involved in the production of glycogen and alpha-glucan via the TreS-Pep2 branch involved in the biosynthesis of maltose-1-phosphate (M1P), and probably in the osmoprotection via the biosynthesis of trehalose. Catalyzes the transfer of glucose from UDP-glucose (UDP-Glc) to glucose-6-phosphate (Glc-6-P) to form trehalose-6-phosphate. ADP-Glc, CDP-Glc, GDP-Glc and TDP-Glc are also glucosyl donors, however, when the pyrimidine sugar nucleotides (CDP-Glc, TDP-Glc and UDP-Glc) are used as substrates, there is an absolute requirement for a high molecular weight polyanion for activity. The chain is Trehalose-6-phosphate synthase from Mycolicibacterium smegmatis (strain ATCC 700084 / mc(2)155) (Mycobacterium smegmatis).